A 161-amino-acid polypeptide reads, in one-letter code: Long arms of the bivalent protein 1 (161 aa).

The short motif at 72–75 (KVIW) is the PP1 binding motif element. The disordered stretch occupies residues 85–161 (GTMFEDFKED…SDKTMCSGQS (77 aa)). The segment covering 97–115 (QESVSSISNNEANWGSSVN) has biased composition (polar residues). Residues 120–129 (NYEKMQKEET) are compositionally biased toward basic and acidic residues. The span at 130-151 (FDPYDSDSDTSEDSDFDEDFED) shows a compositional bias: acidic residues.

As to quaternary structure, interacts with gsp-1 and gsp-2; the interaction is direct.

Its subcellular location is the chromosome. It is found in the nucleus. In terms of biological role, involved in sister chromatid cohesion during mitosis and meiosis. In association with the gsp-2 phosphatase, it both restricts the localization and antagonizes the function of the air-2 kinase during meiosis I and mitosis to promote chromatid cohesion and spindle attachment. This in turn, drives germ cell immortality. Furthermore, may play a role in ensuring the timely assembly of the synaptonemal complex during prophase I of meiosis. The polypeptide is Long arms of the bivalent protein 1 (Caenorhabditis elegans).